Consider the following 393-residue polypeptide: Putative serpin-Z6A (393 aa).

The tract at residues 336 to 360 is RCL; the sequence is GTEAAAATAVLMEGAARYAPPPPPR.

Belongs to the serpin family.

Functionally, probable serine protease inhibitor. The protein is Putative serpin-Z6A of Oryza sativa subsp. japonica (Rice).